Reading from the N-terminus, the 532-residue chain is CTP synthase (532 aa).

The tract at residues 1-269 is amidoligase domain; sequence MNQASTRFIF…DTQILNHFNI (269 aa). Residue serine 17 coordinates CTP. UTP is bound at residue serine 17. ATP-binding positions include 18-23 and aspartate 75; that span reads SLGKGL. Residues aspartate 75 and glutamate 143 each contribute to the Mg(2+) site. Residues 150–152, 190–195, and lysine 226 contribute to the CTP site; these read DIE and KTKPTQ. UTP contacts are provided by residues 190-195 and lysine 226; that span reads KTKPTQ. Positions 294 to 532 constitute a Glutamine amidotransferase type-1 domain; sequence NVAIIGKYIK…FISFIKASLD (239 aa). Glycine 355 is a binding site for L-glutamine. The Nucleophile; for glutamine hydrolysis role is filled by cysteine 382. L-glutamine contacts are provided by residues 383 to 386, glutamate 406, and arginine 462; that span reads MGMQ. Residues histidine 509 and glutamate 511 contribute to the active site.

Belongs to the CTP synthase family. As to quaternary structure, homotetramer.

The enzyme catalyses UTP + L-glutamine + ATP + H2O = CTP + L-glutamate + ADP + phosphate + 2 H(+). It carries out the reaction L-glutamine + H2O = L-glutamate + NH4(+). The catalysed reaction is UTP + NH4(+) + ATP = CTP + ADP + phosphate + 2 H(+). Its pathway is pyrimidine metabolism; CTP biosynthesis via de novo pathway; CTP from UDP: step 2/2. Allosterically activated by GTP, when glutamine is the substrate; GTP has no effect on the reaction when ammonia is the substrate. The allosteric effector GTP functions by stabilizing the protein conformation that binds the tetrahedral intermediate(s) formed during glutamine hydrolysis. Inhibited by the product CTP, via allosteric rather than competitive inhibition. Functionally, catalyzes the ATP-dependent amination of UTP to CTP with either L-glutamine or ammonia as the source of nitrogen. Regulates intracellular CTP levels through interactions with the four ribonucleotide triphosphates. The chain is CTP synthase from Ehrlichia chaffeensis (strain ATCC CRL-10679 / Arkansas).